Reading from the N-terminus, the 183-residue chain is Dual-action ribosomal maturation protein DarP (183 aa).

The protein belongs to the DarP family.

The protein resides in the cytoplasm. In terms of biological role, member of a network of 50S ribosomal subunit biogenesis factors which assembles along the 30S-50S interface, preventing incorrect 23S rRNA structures from forming. Promotes peptidyl transferase center (PTC) maturation. This chain is Dual-action ribosomal maturation protein DarP, found in Escherichia coli O7:K1 (strain IAI39 / ExPEC).